A 99-amino-acid chain; its full sequence is Nucleoid-associated protein UUR10_0100 (99 aa).

The protein belongs to the YbaB/EbfC family. As to quaternary structure, homodimer.

It is found in the cytoplasm. Its subcellular location is the nucleoid. In terms of biological role, binds to DNA and alters its conformation. May be involved in regulation of gene expression, nucleoid organization and DNA protection. The protein is Nucleoid-associated protein UUR10_0100 of Ureaplasma urealyticum serovar 10 (strain ATCC 33699 / Western).